We begin with the raw amino-acid sequence, 709 residues long: Nucleobase-ascorbate transporter 11 (709 aa).

Disordered stretches follow at residues methionine 1–arginine 28 and threonine 58–glycine 167. Residues lysine 15 to tyrosine 25 are compositionally biased toward gly residues. Residues serine 65–threonine 74 show a composition bias toward polar residues. Composition is skewed to basic and acidic residues over residues lysine 75–aspartate 89, asparagine 108–arginine 132, and glutamate 142–glutamate 151. The next 12 membrane-spanning stretches (helical) occupy residues tyrosine 196 to glycine 216, alanine 222 to phenylalanine 242, leucine 246 to serine 266, isoleucine 288 to leucine 308, phenylalanine 310 to tyrosine 330, glycine 336 to leucine 356, isoleucine 369 to glycine 389, isoleucine 454 to alanine 474, leucine 532 to leucine 552, isoleucine 555 to glycine 575, isoleucine 590 to tyrosine 610, and phenylalanine 642 to leucine 662.

The protein belongs to the nucleobase:cation symporter-2 (NCS2) (TC 2.A.40) family. Expressed in leaf primordia and vasculature of pedicels, rosette leaves, sepals, carpels and siliques. Expressed in the root central cylinder.

It is found in the membrane. The sequence is that of Nucleobase-ascorbate transporter 11 (NAT11) from Arabidopsis thaliana (Mouse-ear cress).